A 429-amino-acid chain; its full sequence is UDP-N-acetylglucosamine 1-carboxyvinyltransferase (429 aa).

Residue lysine 22–asparagine 23 participates in phosphoenolpyruvate binding. Arginine 102 lines the UDP-N-acetyl-alpha-D-glucosamine pocket. Cysteine 126 (proton donor) is an active-site residue. Cysteine 126 bears the 2-(S-cysteinyl)pyruvic acid O-phosphothioketal mark. Residues arginine 131–leucine 135, aspartate 316, and isoleucine 338 each bind UDP-N-acetyl-alpha-D-glucosamine.

This sequence belongs to the EPSP synthase family. MurA subfamily.

It is found in the cytoplasm. The catalysed reaction is phosphoenolpyruvate + UDP-N-acetyl-alpha-D-glucosamine = UDP-N-acetyl-3-O-(1-carboxyvinyl)-alpha-D-glucosamine + phosphate. Its pathway is cell wall biogenesis; peptidoglycan biosynthesis. Cell wall formation. Adds enolpyruvyl to UDP-N-acetylglucosamine. In Nitrobacter hamburgensis (strain DSM 10229 / NCIMB 13809 / X14), this protein is UDP-N-acetylglucosamine 1-carboxyvinyltransferase.